Here is a 279-residue protein sequence, read N- to C-terminus: Undecaprenyl-diphosphatase (279 aa).

The next 7 helical transmembrane spans lie at F10–I30, L48–F68, L96–L116, G128–I148, S203–F223, I229–I249, and N259–L279.

This sequence belongs to the UppP family.

The protein localises to the cell inner membrane. It catalyses the reaction di-trans,octa-cis-undecaprenyl diphosphate + H2O = di-trans,octa-cis-undecaprenyl phosphate + phosphate + H(+). In terms of biological role, catalyzes the dephosphorylation of undecaprenyl diphosphate (UPP). Confers resistance to bacitracin. The chain is Undecaprenyl-diphosphatase from Prochlorococcus marinus (strain NATL1A).